Consider the following 351-residue polypeptide: Methionine import ATP-binding protein MetN (351 aa).

Residues 2–238 (IKLNHINKTY…PKHPITRELI (237 aa)) form the ABC transporter domain. 35 to 42 (GYSGAGKS) contributes to the ATP binding site.

Belongs to the ABC transporter superfamily. Methionine importer (TC 3.A.1.24) family. In terms of assembly, the complex is composed of two ATP-binding proteins (MetN), two transmembrane proteins (MetI) and a solute-binding protein (MetQ).

The protein resides in the cell inner membrane. The enzyme catalyses L-methionine(out) + ATP + H2O = L-methionine(in) + ADP + phosphate + H(+). The catalysed reaction is D-methionine(out) + ATP + H2O = D-methionine(in) + ADP + phosphate + H(+). Functionally, part of the ABC transporter complex MetNIQ involved in methionine import. Responsible for energy coupling to the transport system. The polypeptide is Methionine import ATP-binding protein MetN (Helicobacter hepaticus (strain ATCC 51449 / 3B1)).